The following is a 392-amino-acid chain: Chaperone protein DnaJ (392 aa).

In terms of domain architecture, J spans 2 to 67; that stretch reads DYYDVLGVSK…QKRESYDRYG (66 aa). The segment at 149–227 adopts a CR-type zinc-finger fold; the sequence is GVEKELLVSG…CRGQGRIKDK (79 aa). Residues Cys-162, Cys-165, Cys-179, Cys-182, Cys-201, Cys-204, Cys-215, and Cys-218 each contribute to the Zn(2+) site. 4 CXXCXGXG motif repeats span residues 162-169, 179-186, 201-208, and 215-222; these read CETCLGSG, CDRCKGSG, CPECGGEG, and CSNCRGQG.

This sequence belongs to the DnaJ family. Homodimer. It depends on Zn(2+) as a cofactor.

It is found in the cytoplasm. Its function is as follows. Participates actively in the response to hyperosmotic and heat shock by preventing the aggregation of stress-denatured proteins and by disaggregating proteins, also in an autonomous, DnaK-independent fashion. Unfolded proteins bind initially to DnaJ; upon interaction with the DnaJ-bound protein, DnaK hydrolyzes its bound ATP, resulting in the formation of a stable complex. GrpE releases ADP from DnaK; ATP binding to DnaK triggers the release of the substrate protein, thus completing the reaction cycle. Several rounds of ATP-dependent interactions between DnaJ, DnaK and GrpE are required for fully efficient folding. Also involved, together with DnaK and GrpE, in the DNA replication of plasmids through activation of initiation proteins. The protein is Chaperone protein DnaJ of Chlamydia caviae (strain ATCC VR-813 / DSM 19441 / 03DC25 / GPIC) (Chlamydophila caviae).